The following is a 157-amino-acid chain: uncharacterized protein (157 aa).

Lys-115 participates in a covalent cross-link: Isoglutamyl lysine isopeptide (Lys-Gln) (interchain with Q-Cter in protein Pup).

This is an uncharacterized protein from Mycolicibacterium smegmatis (strain ATCC 700084 / mc(2)155) (Mycobacterium smegmatis).